The sequence spans 273 residues: Large ribosomal subunit protein uL2c (273 aa).

The disordered stretch occupies residues 223–273 (MNPVDHPHGGGEGRAPIGRKKPTTPWGYPALGRRSRKRNKYSDSFILRRRK).

It belongs to the universal ribosomal protein uL2 family. In terms of assembly, part of the 50S ribosomal subunit.

The protein resides in the plastid. It is found in the chloroplast. This Calycanthus floridus var. glaucus (Eastern sweetshrub) protein is Large ribosomal subunit protein uL2c (rpl2).